A 972-amino-acid chain; its full sequence is Hyaluronan synthase (972 aa).

Residues 152 to 325 (KPEHQHVGLS…VSLDWRLEQF (174 aa)) form an A1 region. The tract at residues 432 to 604 (EDSHINRVPL…IRAWHLTDGF (173 aa)) is A2.

It belongs to the glycosyltransferase 2 family. CS/HAS subfamily. It depends on Mg(2+) as a cofactor. Co(2+) serves as cofactor.

It localises to the cell membrane. The catalysed reaction is [hyaluronan](n) + UDP-N-acetyl-alpha-D-glucosamine = N-acetyl-beta-D-glucosaminyl-(1-&gt;4)-[hyaluronan](n) + UDP + H(+). It carries out the reaction N-acetyl-beta-D-glucosaminyl-(1-&gt;4)-[hyaluronan](n) + UDP-alpha-D-glucuronate = [hyaluronan](n+1) + UDP + H(+). It catalyses the reaction 3-O-(beta-D-GalNAc-(1-&gt;4)-beta-D-GlcA-(1-&gt;3)-beta-D-Gal-(1-&gt;3)-beta-D-Gal-(1-&gt;4)-beta-D-Xyl)-L-seryl-[protein] + UDP-alpha-D-glucuronate = 3-O-(beta-D-GlcA-(1-&gt;3)-beta-D-GalNAc-(1-&gt;4)-beta-D-GlcA-(1-&gt;3)-beta-D-Gal-(1-&gt;3)-beta-D-Gal-(1-&gt;4)-beta-D-Xyl)-L-seryl-[protein] + UDP + H(+). The enzyme catalyses 3-O-{[beta-D-GalNAc-(1-&gt;4)-beta-D-GlcA-(1-&gt;3)](n)-beta-D-GalNAc-(1-&gt;4)-beta-D-GlcA-(1-&gt;3)-beta-D-Gal-(1-&gt;3)-beta-D-Gal-(1-&gt;4)-beta-D-Xyl}-L-seryl-[protein] + UDP-alpha-D-glucuronate = 3-O-{beta-D-GlcA-(1-&gt;3)-[beta-D-GalNAc-(1-&gt;4)-beta-D-GlcA-(1-&gt;3)](n)-beta-D-GalNAc-(1-&gt;4)-beta-D-GlcA-(1-&gt;3)-beta-D-Gal-(1-&gt;3)-beta-D-Gal-(1-&gt;4)-beta-D-Xyl}-L-seryl-[protein] + UDP + H(+). Catalyzes the polymerization of hyaluronan, a polysaccharide composed of a repeating disaccharide of N-acetylglucosamine (GlcNAc) and glucuronic acid (GlcUA) units. Each unit has the composition in beta-(1-&gt;4)-GlcUA-beta-(1-&gt;3)-GlcNAc. The sequence is that of Hyaluronan synthase (hyaD) from Pasteurella multocida.